Here is a 461-residue protein sequence, read N- to C-terminus: Phosphomethylpyrimidine synthase (461 aa).

Substrate contacts are provided by residues Asn-80, Met-109, Tyr-138, His-173, 193 to 195 (SRG), 234 to 237 (DGLR), and Glu-273. His-277 is a binding site for Zn(2+). A substrate-binding site is contributed by Tyr-300. His-341 lines the Zn(2+) pocket. [4Fe-4S] cluster is bound by residues Cys-421, Cys-424, and Cys-429.

The protein belongs to the ThiC family. Requires [4Fe-4S] cluster as cofactor.

The catalysed reaction is 5-amino-1-(5-phospho-beta-D-ribosyl)imidazole + S-adenosyl-L-methionine = 4-amino-2-methyl-5-(phosphooxymethyl)pyrimidine + CO + 5'-deoxyadenosine + formate + L-methionine + 3 H(+). The protein operates within cofactor biosynthesis; thiamine diphosphate biosynthesis. Its function is as follows. Catalyzes the synthesis of the hydroxymethylpyrimidine phosphate (HMP-P) moiety of thiamine from aminoimidazole ribotide (AIR) in a radical S-adenosyl-L-methionine (SAM)-dependent reaction. The sequence is that of Phosphomethylpyrimidine synthase from Solibacter usitatus (strain Ellin6076).